Here is a 388-residue protein sequence, read N- to C-terminus: Succinate--CoA ligase [ADP-forming] subunit beta (388 aa).

One can recognise an ATP-grasp domain in the interval 9-244; sequence KEILRKYGVT…LDEEDPAEIE (236 aa). ATP contacts are provided by residues lysine 46, 53-55, glutamate 99, alanine 102, and glutamate 107; that span reads GRG. Mg(2+) is bound by residues asparagine 199 and aspartate 213. Substrate is bound by residues asparagine 264 and 321 to 323; that span reads GIM.

The protein belongs to the succinate/malate CoA ligase beta subunit family. As to quaternary structure, heterotetramer of two alpha and two beta subunits. The cofactor is Mg(2+).

It carries out the reaction succinate + ATP + CoA = succinyl-CoA + ADP + phosphate. The enzyme catalyses GTP + succinate + CoA = succinyl-CoA + GDP + phosphate. Its pathway is carbohydrate metabolism; tricarboxylic acid cycle; succinate from succinyl-CoA (ligase route): step 1/1. Functionally, succinyl-CoA synthetase functions in the citric acid cycle (TCA), coupling the hydrolysis of succinyl-CoA to the synthesis of either ATP or GTP and thus represents the only step of substrate-level phosphorylation in the TCA. The beta subunit provides nucleotide specificity of the enzyme and binds the substrate succinate, while the binding sites for coenzyme A and phosphate are found in the alpha subunit. This chain is Succinate--CoA ligase [ADP-forming] subunit beta, found in Herminiimonas arsenicoxydans.